The chain runs to 184 residues: NADH-quinone oxidoreductase subunit B (184 aa).

Positions 37, 38, 103, and 132 each coordinate [4Fe-4S] cluster.

This sequence belongs to the complex I 20 kDa subunit family. As to quaternary structure, NDH-1 is composed of 14 different subunits. Subunits NuoB, C, D, E, F, and G constitute the peripheral sector of the complex. It depends on [4Fe-4S] cluster as a cofactor.

It is found in the cell membrane. The enzyme catalyses a quinone + NADH + 5 H(+)(in) = a quinol + NAD(+) + 4 H(+)(out). NDH-1 shuttles electrons from NADH, via FMN and iron-sulfur (Fe-S) centers, to quinones in the respiratory chain. The immediate electron acceptor for the enzyme in this species is believed to be a menaquinone. Couples the redox reaction to proton translocation (for every two electrons transferred, four hydrogen ions are translocated across the cytoplasmic membrane), and thus conserves the redox energy in a proton gradient. The polypeptide is NADH-quinone oxidoreductase subunit B (Mycobacteroides abscessus (strain ATCC 19977 / DSM 44196 / CCUG 20993 / CIP 104536 / JCM 13569 / NCTC 13031 / TMC 1543 / L948) (Mycobacterium abscessus)).